The chain runs to 356 residues: Tyrosine recombinase XerS (356 aa).

Positions Leu16–Thr121 constitute a Core-binding (CB) domain. In terms of domain architecture, Tyr recombinase spans Gly169–Asp354. Residues Arg210, Lys234, His306, Arg309, and His332 contribute to the active site. Tyr341 functions as the O-(3'-phospho-DNA)-tyrosine intermediate in the catalytic mechanism.

The protein belongs to the 'phage' integrase family. XerS subfamily.

Its subcellular location is the cytoplasm. FtsK is required for recombination. In terms of biological role, site-specific tyrosine recombinase, which acts by catalyzing the cutting and rejoining of the recombining DNA molecules. Essential to convert dimers of the bacterial chromosome into monomers to permit their segregation at cell division. The protein is Tyrosine recombinase XerS of Streptococcus pneumoniae (strain 70585).